Reading from the N-terminus, the 354-residue chain is Probable serine acetyltransferase 2 (354 aa).

The protein belongs to the transferase hexapeptide repeat family. In terms of assembly, homomultimer.

The enzyme catalyses L-serine + acetyl-CoA = O-acetyl-L-serine + CoA. It participates in amino-acid biosynthesis; L-cysteine biosynthesis; L-cysteine from L-serine: step 1/2. This is Probable serine acetyltransferase 2 (SAT2) from Oryza sativa subsp. japonica (Rice).